A 473-amino-acid chain; its full sequence is Trigger factor (473 aa).

The PPIase FKBP-type domain occupies 162–243 (GDFVSIDLSA…VKSIKVRELP (82 aa)). Positions 433-473 (TAEFFGPSGEQAEAEQDEAAPAEDATEETDADSDEAADDSK) are disordered. Positions 444–473 (AEAEQDEAAPAEDATEETDADSDEAADDSK) are enriched in acidic residues.

Belongs to the FKBP-type PPIase family. Tig subfamily.

The protein resides in the cytoplasm. The catalysed reaction is [protein]-peptidylproline (omega=180) = [protein]-peptidylproline (omega=0). Involved in protein export. Acts as a chaperone by maintaining the newly synthesized protein in an open conformation. Functions as a peptidyl-prolyl cis-trans isomerase. This chain is Trigger factor, found in Mycolicibacterium vanbaalenii (strain DSM 7251 / JCM 13017 / BCRC 16820 / KCTC 9966 / NRRL B-24157 / PYR-1) (Mycobacterium vanbaalenii).